An 802-amino-acid polypeptide reads, in one-letter code: MSFHHRVFKLSALSLALFSHLSFASTDSELNLDFLQGMSAIPSVLKSGSDFPAGQYYVDVIVNQENVGKARLSITPQEESANALCLSPEWLKAAGVPVRLEGYASTLNAAGQCYVLSRNPYTRVDFSYGSQSLVFSIPQSFLVGKTDPSRWDYGVPAARLKYSANASQTSGQSTSAYANADLMVNLGRWVLASNMSASRYADGSGEFTARDITLSTAISQVQGDLLLGKSQTRSALFSDFGFYGAALRSNSNMLPWEARGYAPLITGVANSTSRVTISQNGYAVYSKVVPPGPYQLDDVRSVGNGDLVVTVEDASGHKTTTVYPVTTLPTLLRPGEVEYNVAVGRKSSNYKLKKPFADGENGMFWMGSVGYGFDSTTLNAASILHGKYQAGGVSVTQALGGFGAVSAGMNLSQAKYDNGDNKRGHSVSAKYAKSFSDSSDLQLLAYRYQSKGYVEFADFYSTDRYTRYNTKSRYEMRFSQRLGNSNLNLAGWQEDYWWMKGKAIGGDVSLSTTILDGVSVFLNGSYSKRPYLDKPDYSTSLSFSIPFTLGGVRHYSSTGLSYSSSGRMGMNSGVSASPTDRLSYGLNTNLSDKGDRSLSGNLSYGFDAIQTNMMLSQGRDNTTVSGSVSGTILGTADSGLMMTKETGNTLGVARIPGVKGVRINGSAPTNSKGYTVVNLSDYSLNRVSVDMENVPDDLELQTTSFNVVPTEKAVVYREFGAEHVLRYILRVKERDGRILNGGSAQTEQGLDAGFIAGNGVLLMNMLSAPSRVSVERGDGSVCHFSVKGIVPNTGKVQEVYCE.

Positions 1–24 (MSFHHRVFKLSALSLALFSHLSFA) are cleaved as a signal peptide. Cysteine 782 and cysteine 801 are oxidised to a cystine.

The protein belongs to the fimbrial export usher family.

The protein resides in the cell outer membrane. Its function is as follows. Involved in the export and assembly of FimA fimbrial subunits across the outer membrane. The polypeptide is Outer membrane usher protein PefC (pefC) (Salmonella typhimurium (strain LT2 / SGSC1412 / ATCC 700720)).